The sequence spans 476 residues: Casein kinase 1-like protein 7 (476 aa).

In terms of domain architecture, Protein kinase spans 9-278; it reads FKLGKKIGSG…LKRLFRDLFI (270 aa). ATP-binding positions include 15–23 and K38; that span reads IGSGSFGEL. The Proton acceptor role is filled by D128. Disordered stretches follow at residues 299 to 324 and 340 to 464; these read GSSSGSSSRTRHHTTAKPGFNADPIE and PGAV…TRED. A compositionally biased stretch (basic and acidic residues) spans 357–367; that stretch reads PRDRSRSRNSD. Residues 382–422 show a composition bias toward low complexity; sequence ANSSSRYRASSSRKAVAASSSRPSSAGGPSESRTSSRLVSS. The span at 423 to 432 shows a compositional bias: gly residues; that stretch reads SGGGGSGSGN.

This sequence belongs to the protein kinase superfamily. CK1 Ser/Thr protein kinase family. Casein kinase I subfamily. Monomer. Autophosphorylated.

It localises to the cytoplasm. The catalysed reaction is L-seryl-[protein] + ATP = O-phospho-L-seryl-[protein] + ADP + H(+). It catalyses the reaction L-threonyl-[protein] + ATP = O-phospho-L-threonyl-[protein] + ADP + H(+). Casein kinases are operationally defined by their preferential utilization of acidic proteins such as caseins as substrates. It can phosphorylate a large number of proteins. The protein is Casein kinase 1-like protein 7 of Arabidopsis thaliana (Mouse-ear cress).